The sequence spans 440 residues: Xaa-Pro dipeptidase (440 aa).

Residues Asp244, Asp255, His335, Glu380, and Glu419 each contribute to the Mn(2+) site.

Belongs to the peptidase M24B family. Bacterial-type prolidase subfamily. Mn(2+) serves as cofactor.

The enzyme catalyses Xaa-L-Pro dipeptide + H2O = an L-alpha-amino acid + L-proline. Splits dipeptides with a prolyl residue in the C-terminal position. The chain is Xaa-Pro dipeptidase from Shewanella denitrificans (strain OS217 / ATCC BAA-1090 / DSM 15013).